Here is a 512-residue protein sequence, read N- to C-terminus: Transcriptional activator CadC (512 aa).

Topologically, residues 1–154 are cytoplasmic; the sequence is MQQPVVRVGE…PPEQSPVKSK (154 aa). Residues 3-102 constitute a DNA-binding region (ompR/PhoB-type); the sequence is QPVVRVGEWL…VPKRGYKLMV (100 aa). A helical transmembrane segment spans residues 155 to 180; the sequence is RFTTFWVWFFFLLSLGICVALVAFSS. Over 181–512 the chain is Periplasmic; that stretch reads LDTRLPMSKS…PYLDKFLASE (332 aa). The cysteines at positions 208 and 272 are disulfide-linked.

In terms of assembly, homodimer. Dimerization of the periplasmic domain is required for activation of the cadBA operon. Interacts strongly with the lysine permease LysP in the absence of lysine or at low lysine concentrations. Interaction is markedly attenuated under increasing lysine levels. Concomitant pH-dependent protonation of periplasmic amino acids in both proteins dissolves their electrostatic connections resulting in further destabilization of the CadC/LysP interaction. Post-translationally, contains a functionally important disulfide bond, which may provide structural support for the pH-dependent activation via a switch of the sensor between the inactive and active state.

The protein localises to the cell inner membrane. Its activity is regulated as follows. Activation of CadC requires two stimuli, lysine and low pH. CadC shows an extremely low affinity for lysine, and it senses the extracellular lysine not directly but indirectly via interaction with the lysine permease LysP. At a low external lysine concentration, CadC is inactivated by an interaction with LysP. When lysine is abundantly available, the interaction between LysP and CadC is released, and CadC becomes susceptible to activation by low pH. Acidification of the external milieu is sensed by protonation of a patch of acidic amino acids within the periplasmic domain and associated to conformational and/or oligomerization effects. The pH-dependent regulation may be due to the presence/absence of a disulfide bond within the periplasmic domain. At pH 7.6, a disulfide bond is found in the inactive state of CadC. At pH 5.8, disulfide bond formation is prevented, which transforms CadC into a semi-active state with respect to both the pH and the lysine stimuli. Activity is also feedback inhibited by cadaverine. Cadaverine binds first to the central cavity, which putatively triggers intramolecular rearrangements to expose the binding sites for cadaverine at the dimer interface, which inactivates CadC and consequently shuts off transcription of the cadBA operon. In terms of biological role, regulates the lysine- and pH-dependent expression of the lysine decarboxylase CadA and the cadaverine-lysine antiporter CadB. At low external pH, and in the presence of external lysine, CadC activates transcription of the cadBA operon by binding directly to two sites, Cad1 and Cad2, within the cadBA promoter region (Pcad). Preferentially binds to AT-rich regions within the Cad1 promoter. This Escherichia coli (strain K12) protein is Transcriptional activator CadC (cadC).